The chain runs to 1038 residues: Probable LRR receptor-like serine/threonine-protein kinase At1g53430 (1038 aa).

An N-terminal signal peptide occupies residues 1 to 28; it reads MGFIFSTEKVVYVLLLIFVCLENFGSNA. Topologically, residues 29 to 609 are extracellular; that stretch reads QLLPEDEVQT…VDTGKPLSNG (581 aa). Asn-48, Asn-77, Asn-85, Asn-112, and Asn-127 each carry an N-linked (GlcNAc...) asparagine glycan. LRR repeat units follow at residues 113–137, 139–160, 161–184, 185–208, 210–234, and 236–256; these read LTRLREIDLSRNFLNGTIPTTLSQI, LEILSVIGNRLSGPFPPQLGDI, TTLTDVNLETNLFTGPLPRNLGNL, RSLKELLLSANNFTGQIPESLSNL, NLTEFRIDGNSLSGKIPDFIGNWTL, and ERLDLQGTSMEGPIPPSISNL. N-linked (GlcNAc...) asparagine glycosylation is found at Asn-196, Asn-210, Asn-231, Asn-255, and Asn-258. LRR repeat units lie at residues 259 to 281, 282 to 305, 306 to 328, 330 to 351, and 352 to 374; these read LTELRITDLRGQAAFSFPDLRNL, MKMKRLVLRNCLIRGPIPEYIGSM, SELKTLDLSSNMLTGVIPDTFRN, DAFNFMFLNNNSLTGPVPQFII, and NSKENLDLSDNNFTQPPTLSCNQ. N-linked (GlcNAc...) asparagine glycans are attached at residues Asn-339, Asn-363, Asn-471, and Asn-561. Residues 610-630 traverse the membrane as a helical segment; that stretch reads AVAGIVIAACAVFGLLVLVIL. Over 631-1038 the chain is Cytoplasmic; the sequence is RLTGYLGGKE…LDDLTDVKIE (408 aa). Thr-658 carries the post-translational modification Phosphothreonine. One can recognise a Protein kinase domain in the interval 669–950; that stretch reads FDPENKIGEG…EGKIKVQPPL (282 aa). ATP contacts are provided by residues 675 to 683 and Lys-697; that span reads IGEGGFGPV. Tyr-742 carries the phosphotyrosine modification. The active-site Proton acceptor is Asp-795. The residue at position 828 (Ser-828) is a Phosphoserine. Phosphothreonine occurs at positions 829 and 834. A Phosphotyrosine modification is found at Tyr-842. Residues 984–1038 are disordered; that stretch reads RNREQDISSSSMDGPWVDSSFSEPGKDVSLQQQEEGRSSSSSRKLLDDLTDVKIE. Over residues 1027 to 1038 the composition is skewed to basic and acidic residues; sequence KLLDDLTDVKIE.

It belongs to the protein kinase superfamily. Ser/Thr protein kinase family.

The protein localises to the membrane. The catalysed reaction is L-seryl-[protein] + ATP = O-phospho-L-seryl-[protein] + ADP + H(+). It catalyses the reaction L-threonyl-[protein] + ATP = O-phospho-L-threonyl-[protein] + ADP + H(+). This Arabidopsis thaliana (Mouse-ear cress) protein is Probable LRR receptor-like serine/threonine-protein kinase At1g53430.